A 605-amino-acid chain; its full sequence is MLKRPAYYNIFLLPTGRRLAKTYNILENLITLPKTDWKLYETIEQKLKWMIQEYRSDWRDRLSHHERYGMKVRLTYRSESERTKLEEKITDLVISHGKKASTVHFCTRESYKGRVRANQILILLEPEGLGEVEGLTVRAEGNWMSLVTHCLFILGSTLTCFGFVDPARGCRFNLLPYIKTLHPNDKWLLDLQASWRLEYGVSRSIEEGALYDFFAESHTLYAVRTWPGCEKYLGALEAFVGRLAVLPAQVLTSKEHDFQSKLMSKAKKTGFHYLYYLVSFTMKTSLTDRIVKEALATVKVFSFVVGRDHLPAVGVYSGEDFSKQFLSMAVGTMDTPSRYAITIVSGMQVDVDVKSVTGIASFKDGTQHTIVDEILLQPARLVLLGRKGGGKSRLSKIFSELGYNVLDSDTYGKVLTLVADRGEDGLDDALKKFVRLTPDERKAVPSIFETEMDRLCEVFGSRGLRPYAQRCQQQAGRLHWELYAAFQEFYDRTIRVITPDKFRFAYFAELERGGFDDNGLTFSPELKTVVFVHSMPELFEAMGGCVAEIVPTHSTRLAILLRGQGLSVNAELHLHDFYVALNQNGARKVSLGWLVHALNELLKMR.

In terms of assembly, interacts with VP1.

Its subcellular location is the virion. The protein resides in the host cytoplasm. It localises to the host cytoskeleton. Minor inner capsid component. Displays NTPase and RNA 5'-triphosphatase (RTPase) activities. May function as a cofactor of polymerase VP1. Associates with microtubules and plays a role in the formation, structural organization and morphology of viral inclusions, where the assembly of cores and the replication of viral RNA occur. The polypeptide is Microtubule-associated protein VP10 (Colorado tick fever virus (strain USA/Florio N-7180) (CTFV)).